A 361-amino-acid polypeptide reads, in one-letter code: Peptide chain release factor 1 (361 aa).

Glutamine 235 is modified (N5-methylglutamine). The tract at residues 284-306 is disordered; sequence SQQATAEAMTRKLQVGSGDRSQR.

The protein belongs to the prokaryotic/mitochondrial release factor family. Post-translationally, methylated by PrmC. Methylation increases the termination efficiency of RF1.

It is found in the cytoplasm. Peptide chain release factor 1 directs the termination of translation in response to the peptide chain termination codons UAG and UAA. In Xylella fastidiosa (strain 9a5c), this protein is Peptide chain release factor 1.